A 223-amino-acid polypeptide reads, in one-letter code: Ribose-5-phosphate isomerase A (223 aa).

Residues 28-31, 81-84, and 94-97 each bind substrate; these read TGST, DGTD, and KGGG. The active-site Proton acceptor is E103. K121 contributes to the substrate binding site.

This sequence belongs to the ribose 5-phosphate isomerase family. In terms of assembly, homodimer.

The catalysed reaction is aldehydo-D-ribose 5-phosphate = D-ribulose 5-phosphate. It participates in carbohydrate degradation; pentose phosphate pathway; D-ribose 5-phosphate from D-ribulose 5-phosphate (non-oxidative stage): step 1/1. In terms of biological role, catalyzes the reversible conversion of ribose-5-phosphate to ribulose 5-phosphate. In Baumannia cicadellinicola subsp. Homalodisca coagulata, this protein is Ribose-5-phosphate isomerase A.